We begin with the raw amino-acid sequence, 324 residues long: Hairy/enhancer-of-split related with YRPW motif protein 2 (324 aa).

Residues 1–34 form a disordered region; that stretch reads MKRPCEDSTSDSDMDETIDVGSENNYSGQSNGSF. A compositionally biased stretch (acidic residues) spans 8 to 18; that stretch reads STSDSDMDETI. Residues 22–34 are compositionally biased toward polar residues; that stretch reads SENNYSGQSNGSF. Residues 48–103 enclose the bHLH domain; that stretch reads ARKKRRGIIEKRRRDRINNSLSELRRLVPTAFEKQGSAKLEKAEILQMTVDHLKML. The Orange domain maps to 122–157; sequence LSIGFRECLTEVARYLSSVEGLDSSDPLRVRLVSHL. Positions 294–311 are enriched in low complexity; the sequence is SSSVSTSTTSQQSSGSSS. Positions 294 to 324 are disordered; the sequence is SSSVSTSTTSQQSSGSSSKPYRPWGTEVGAF. The short motif at 314–317 is the YRPW motif element; sequence YRPW.

It belongs to the HEY family.

It localises to the nucleus. Transcriptional repressor. Downstream effector of Notch signaling which regulates cell fate choice in angioblasts. Represses the venous cell fate, thereby promoting the arterial cell fate and aorta formation. This is Hairy/enhancer-of-split related with YRPW motif protein 2 (hey2) from Danio rerio (Zebrafish).